Here is a 224-residue protein sequence, read N- to C-terminus: Elongation factor 1-beta (224 aa).

This sequence belongs to the EF-1-beta/EF-1-delta family. In terms of assembly, EF-1 is composed of 4 subunits: alpha, beta (1B-alpha=beta'), delta (1B-beta), and gamma (1B-gamma).

EF-1-beta and EF-1-beta' stimulate the exchange of GDP bound to EF-1-alpha to GTP. The protein is Elongation factor 1-beta of Oryza sativa subsp. japonica (Rice).